Consider the following 297-residue polypeptide: Probable endonuclease 4 (297 aa).

Zn(2+) contacts are provided by His69, His110, Glu145, Asp179, His182, His214, Asp227, His229, and Glu259.

This sequence belongs to the AP endonuclease 2 family. Zn(2+) is required as a cofactor.

The enzyme catalyses Endonucleolytic cleavage to 5'-phosphooligonucleotide end-products.. Endonuclease IV plays a role in DNA repair. It cleaves phosphodiester bonds at apurinic or apyrimidinic (AP) sites, generating a 3'-hydroxyl group and a 5'-terminal sugar phosphate. This Bacillus licheniformis (strain ATCC 14580 / DSM 13 / JCM 2505 / CCUG 7422 / NBRC 12200 / NCIMB 9375 / NCTC 10341 / NRRL NRS-1264 / Gibson 46) protein is Probable endonuclease 4.